The chain runs to 175 residues: uncharacterized protein (175 aa).

Disordered stretches follow at residues methionine 1–histidine 32 and lysine 156–glutamine 175. Low complexity predominate over residues leucine 14 to lysine 24.

This is an uncharacterized protein from Mycoplasma pneumoniae (strain ATCC 29342 / M129 / Subtype 1) (Mycoplasmoides pneumoniae).